The sequence spans 438 residues: RNA ligase (438 aa).

Y48, R63, and K83 together coordinate ATP. K127 (N6-AMP-lysine intermediate) is an active-site residue. E198, K311, and K313 together coordinate ATP. D342 serves as a coordination point for Mg(2+).

Mg(2+) serves as cofactor. It depends on Mn(2+) as a cofactor.

Functionally, involved in countering a host defense mechanism which, following viral infection, activates the host induced anticodon nuclease and shuts off viral translation. Repairs 5'-PO4 and 3'-OH groups in the cleaved host tRNA. The polypeptide is RNA ligase (Rhodothermus phage RM378 (Bacteriophage RM378)).